The sequence spans 37 residues: Large ribosomal subunit protein bL36c (37 aa).

The protein belongs to the bacterial ribosomal protein bL36 family.

It is found in the plastid. The protein localises to the chloroplast. This chain is Large ribosomal subunit protein bL36c, found in Tupiella akineta (Green alga).